A 484-amino-acid polypeptide reads, in one-letter code: Hexokinase-1 (484 aa).

One can recognise a Hexokinase domain in the interval 25-465 (KTLQDHLDEL…SGVGAALVSA (441 aa)). The interval 79 to 212 (DGNEHGSYLA…CNNVRLNAIL (134 aa)) is hexokinase small subdomain. An ATP-binding site is contributed by 90 to 95 (DLGGTN). Substrate-binding positions include 160 to 161 (SY), 177 to 178 (TK), and 213 to 214 (SD). A hexokinase large subdomain region spans residues 213 to 454 (SDTTGTLVAS…SKVVTIPAED (242 aa)). An ATP-binding site is contributed by T237. Substrate-binding residues include N240, E269, and E302. ATP is bound by residues 307–308 (GC), 344–348 (TSVLS), and 419–423 (SVYNL).

The protein belongs to the hexokinase family. As to quaternary structure, monomer.

It catalyses the reaction a D-hexose + ATP = a D-hexose 6-phosphate + ADP + H(+). The catalysed reaction is D-mannose + ATP = D-mannose 6-phosphate + ADP + H(+). It carries out the reaction D-fructose + ATP = D-fructose 6-phosphate + ADP + H(+). The enzyme catalyses D-glucose + ATP = D-glucose 6-phosphate + ADP + H(+). It functions in the pathway carbohydrate metabolism; hexose metabolism. The protein operates within carbohydrate degradation; glycolysis; D-glyceraldehyde 3-phosphate and glycerone phosphate from D-glucose: step 1/4. Its function is as follows. Catalyzes the phosphorylation of hexose (six-carbon sugars) to hexose 6-phosphate. Phosphorylates D-fructose, D-mannose and, to a lower extent, D-glucose. Compared to hxk2, has low affinity for D-glucose. The sequence is that of Hexokinase-1 from Schizosaccharomyces pombe (strain 972 / ATCC 24843) (Fission yeast).